A 261-amino-acid polypeptide reads, in one-letter code: MAAISTCQTVIPLPIPVFFNQQFPTLVDICARWQLVFDADAPFELRFESDTLTLHKRDEPKLDGIVVDFVTGAVAHRRKFGGGRGQSIAKAVGLKQGVTPKVVDGTAGLGRDAFVLASLGCTVIMVERHPVVAALLEDGLRRAYQDAEIGDWMRERMQLFHGSSLEALAKLEQEVDVVYLDPMYPHRDKSALVKKEMRVFQTLVGADLDADGLLAPAMALASKRVVVKRPDYAEDLAGVKPSMVIETKKNRFDVYVKSAMK.

S-adenosyl-L-methionine-binding positions include 111–112 (RD), 127–128 (ER), 163–164 (SS), and Asp181.

It belongs to the methyltransferase superfamily. RsmJ family.

It is found in the cytoplasm. It catalyses the reaction guanosine(1516) in 16S rRNA + S-adenosyl-L-methionine = N(2)-methylguanosine(1516) in 16S rRNA + S-adenosyl-L-homocysteine + H(+). In terms of biological role, specifically methylates the guanosine in position 1516 of 16S rRNA. This Shewanella sp. (strain ANA-3) protein is Ribosomal RNA small subunit methyltransferase J.